The chain runs to 217 residues: Outer-membrane lipoprotein LolB (217 aa).

The signal sequence occupies residues 1–20 (MSKTVRTLALGGLVLAGLSA). C21 carries the N-palmitoyl cysteine lipid modification. Residue C21 is the site of S-diacylglycerol cysteine attachment. Positions 105 to 124 (DTTSGAGRLEGLEGGPRSGP) are disordered.

The protein belongs to the LolB family. As to quaternary structure, monomer.

Its subcellular location is the cell outer membrane. Plays a critical role in the incorporation of lipoproteins in the outer membrane after they are released by the LolA protein. This chain is Outer-membrane lipoprotein LolB, found in Xanthomonas axonopodis pv. citri (strain 306).